The sequence spans 160 residues: MAEKTYPMTLEEKEKLEKELEELKLVRRPEVVERIKIARSYGDLSENSEYEAAKDEQAFVEGQISSLETKIRYAEIVNSDAVAKDEVAIGKTVTIQEVGESEEEVYIIVGSAGADAFAGKVSNESPIGQALIGKKTGDTATVETPVGSYDVKILKVEKTV.

Residues Met-1–Arg-72 are a coiled coil.

It belongs to the GreA/GreB family.

In terms of biological role, necessary for efficient RNA polymerase transcription elongation past template-encoded arresting sites. The arresting sites in DNA have the property of trapping a certain fraction of elongating RNA polymerases that pass through, resulting in locked ternary complexes. Cleavage of the nascent transcript by cleavage factors such as GreA or GreB allows the resumption of elongation from the new 3'terminus. GreA releases sequences of 2 to 3 nucleotides. This chain is Transcription elongation factor GreA, found in Streptococcus sanguinis (strain SK36).